The following is a 190-amino-acid chain: Imidazoleglycerol-phosphate dehydratase (190 aa).

The protein belongs to the imidazoleglycerol-phosphate dehydratase family.

Its subcellular location is the cytoplasm. The enzyme catalyses D-erythro-1-(imidazol-4-yl)glycerol 3-phosphate = 3-(imidazol-4-yl)-2-oxopropyl phosphate + H2O. The protein operates within amino-acid biosynthesis; L-histidine biosynthesis; L-histidine from 5-phospho-alpha-D-ribose 1-diphosphate: step 6/9. In Wolinella succinogenes (strain ATCC 29543 / DSM 1740 / CCUG 13145 / JCM 31913 / LMG 7466 / NCTC 11488 / FDC 602W) (Vibrio succinogenes), this protein is Imidazoleglycerol-phosphate dehydratase.